The primary structure comprises 367 residues: Flagellar P-ring protein (367 aa).

An N-terminal signal peptide occupies residues 1 to 21 (MYVFKALAGIVLALVATLAHA).

Belongs to the FlgI family. As to quaternary structure, the basal body constitutes a major portion of the flagellar organelle and consists of four rings (L,P,S, and M) mounted on a central rod.

It is found in the periplasm. It localises to the bacterial flagellum basal body. Assembles around the rod to form the L-ring and probably protects the motor/basal body from shearing forces during rotation. This is Flagellar P-ring protein from Salmonella paratyphi C (strain RKS4594).